Reading from the N-terminus, the 437-residue chain is GTPase Obg (437 aa).

Residues 2–160 (SMFLDTAKIS…RQLELELKIL (159 aa)) enclose the Obg domain. The 178-residue stretch at 161-338 (ADVGLVGFPS…LLEATAELLA (178 aa)) folds into the OBG-type G domain. Residues 167-174 (GFPSVGKS), 192-196 (FTTIV), 214-217 (DLPG), 284-287 (NKMD), and 319-321 (SSL) contribute to the GTP site. Residues S174 and T194 each coordinate Mg(2+). One can recognise an OCT domain in the interval 359-437 (GFAKTEKDFE…IGKFEFEFVD (79 aa)).

This sequence belongs to the TRAFAC class OBG-HflX-like GTPase superfamily. OBG GTPase family. As to quaternary structure, monomer. The cofactor is Mg(2+).

Its subcellular location is the cytoplasm. Its function is as follows. An essential GTPase which binds GTP, GDP and possibly (p)ppGpp with moderate affinity, with high nucleotide exchange rates and a fairly low GTP hydrolysis rate. Plays a role in control of the cell cycle, stress response, ribosome biogenesis and in those bacteria that undergo differentiation, in morphogenesis control. In Streptococcus pyogenes serotype M2 (strain MGAS10270), this protein is GTPase Obg.